The following is a 114-amino-acid chain: UPF0342 protein SE_1526 (114 aa).

The protein belongs to the UPF0342 family.

In Staphylococcus epidermidis (strain ATCC 12228 / FDA PCI 1200), this protein is UPF0342 protein SE_1526.